Here is a 364-residue protein sequence, read N- to C-terminus: Appendage-associated protein (364 aa).

Coiled-coil stretches lie at residues 142–196 (IIHE…AECR) and 288–313 (RIAQ…ALGK).

The protein resides in the secreted. In terms of biological role, associates with actin filament appendages that are formed in the inclusion appendages of the parasitophorous vacuole during infection of the host erythrocyte. The sequence is that of Appendage-associated protein from Anaplasma marginale (strain Illinois).